The following is an 88-amino-acid chain: MALSTIVSQRKQIKRKAPRGFLKRVFKRKKPQLRLEKSGDLLVHLNCLLFVHRLAEESRTNACASKCRVINKEHVLAAAKVILKKSRG.

The protein belongs to the CENP-W/WIP1 family. As to quaternary structure, heterodimer with CENPT; this dimer coassembles with CENPS-CENPX heterodimers at centromeres to form the tetrameric CENP-T-W-S-X complex, which is a subcomplex of the large constitutive centromere-associated network (CCAN, also known as the interphase centromere complex or ICEN). Interacts with NPM1. In terms of tissue distribution, highly expressed in ovary, liver, lung and pancreas and to a lower extent in breast and gastrointestinal tract cancers; such as those of the colon, rectum and stomach. Overexpressed in high grade breast invasive tumors. Expressed in many cancer cell types.

The protein resides in the nucleus. Its subcellular location is the chromosome. It localises to the centromere. The protein localises to the kinetochore. It is found in the nucleus matrix. The protein resides in the nucleolus. In terms of biological role, component of the CENPA-NAC (nucleosome-associated) complex, a complex that plays a central role in assembly of kinetochore proteins, mitotic progression and chromosome segregation. The CENPA-NAC complex recruits the CENPA-CAD (nucleosome distal) complex and may be involved in incorporation of newly synthesized CENPA into centromeres. Part of a nucleosome-associated complex that binds specifically to histone H3-containing nucleosomes at the centromere, as opposed to nucleosomes containing CENPA. Component of the heterotetrameric CENP-T-W-S-X complex that binds and supercoils DNA, and plays an important role in kinetochore assembly. CENPW has a fundamental role in kinetochore assembly and function. It is one of the inner kinetochore proteins, with most further proteins binding downstream. Required for normal chromosome organization and normal progress through mitosis. This Homo sapiens (Human) protein is Centromere protein W (CENPW).